The sequence spans 266 residues: Heat-inducible transcription repressor HrcA (266 aa).

This sequence belongs to the HrcA family.

Functionally, negative regulator of class I heat shock genes (grpE-dnaK-dnaJ and groELS operons). Prevents heat-shock induction of these operons. In Helicobacter pylori (strain J99 / ATCC 700824) (Campylobacter pylori J99), this protein is Heat-inducible transcription repressor HrcA.